The primary structure comprises 64 residues: Large ribosomal subunit protein bL32 (64 aa).

This sequence belongs to the bacterial ribosomal protein bL32 family.

This Mycoplasma mobile (strain ATCC 43663 / 163K / NCTC 11711) (Mesomycoplasma mobile) protein is Large ribosomal subunit protein bL32.